Here is a 145-residue protein sequence, read N- to C-terminus: Deoxyuridine 5'-triphosphate nucleotidohydrolase (145 aa).

Substrate-binding positions include 62-64 (RSG), Asn75, 79-81 (TVD), and Lys89.

The protein belongs to the dUTPase family. Requires Mg(2+) as cofactor.

It catalyses the reaction dUTP + H2O = dUMP + diphosphate + H(+). The protein operates within pyrimidine metabolism; dUMP biosynthesis; dUMP from dCTP (dUTP route): step 2/2. Functionally, this enzyme is involved in nucleotide metabolism: it produces dUMP, the immediate precursor of thymidine nucleotides and it decreases the intracellular concentration of dUTP so that uracil cannot be incorporated into DNA. The protein is Deoxyuridine 5'-triphosphate nucleotidohydrolase of Helicobacter pylori (strain ATCC 700392 / 26695) (Campylobacter pylori).